The chain runs to 264 residues: [LysW]-aminoadipate/[LysW]-glutamate kinase (264 aa).

Residues 35–36 (GG), Arg62, and Asn167 each bind substrate.

Belongs to the acetylglutamate kinase family. LysZ subfamily.

It localises to the cytoplasm. The enzyme catalyses [amino-group carrier protein]-C-terminal-N-(1,4-dicarboxybutan-1-yl)-L-glutamine + ATP = [amino-group carrier protein]-C-terminal-N-(1-carboxy-5-phosphooxy-5-oxopentan-1-yl)-L-glutamine + ADP. It carries out the reaction [amino-group carrier protein]-C-terminal-gamma-(L-glutamyl)-L-glutamate + ATP = [amino-group carrier protein]-C-terminal-gamma-(5-phospho-L-glutamyl)-L-glutamate + ADP. It participates in amino-acid biosynthesis; L-lysine biosynthesis via AAA pathway; L-lysine from L-alpha-aminoadipate (Thermus route): step 2/5. Its pathway is amino-acid biosynthesis; L-arginine biosynthesis. Involved in both the arginine and lysine biosynthetic pathways. Phosphorylates the LysW-bound precursors glutamate (for arginine biosynthesis), respectively alpha-aminoadipate (for lysine biosynthesis). This is [LysW]-aminoadipate/[LysW]-glutamate kinase from Saccharolobus solfataricus (strain ATCC 35092 / DSM 1617 / JCM 11322 / P2) (Sulfolobus solfataricus).